A 720-amino-acid polypeptide reads, in one-letter code: Glycine--tRNA ligase beta subunit (720 aa).

This sequence belongs to the class-II aminoacyl-tRNA synthetase family. As to quaternary structure, tetramer of two alpha and two beta subunits.

It localises to the cytoplasm. It catalyses the reaction tRNA(Gly) + glycine + ATP = glycyl-tRNA(Gly) + AMP + diphosphate. The polypeptide is Glycine--tRNA ligase beta subunit (Acidovorax sp. (strain JS42)).